The sequence spans 240 residues: Bidirectional sugar transporter SWEET7c (240 aa).

The Extracellular segment spans residues 1-12 (MVSPDLIRNVVG). The 39-residue stretch at 10-48 (VVGIVGNVISFGLFLSPVPIFWWIIKNKNVQNFKADPIL) folds into the MtN3/slv 1 domain. A helical membrane pass occupies residues 13–33 (IVGNVISFGLFLSPVPIFWWI). Topologically, residues 34-46 (IKNKNVQNFKADP) are cytoplasmic. Residues 47–67 (ILVVTINGISLVIEAVYLTIF) traverse the membrane as a helical segment. Residues 68 to 78 (FLFSDKKNKKK) lie on the Extracellular side of the membrane. The helical transmembrane segment at 79-99 (MGVVLATEALFMAAVAVGVLL) threads the bilayer. At 100-108 (GAHTHQRRS) the chain is on the cytoplasmic side. The helical transmembrane segment at 109 to 129 (LIVGILCVIFGTIMYSSPLTI) threads the bilayer. Residues 110–191 (IVGILCVIFG…LILYAIYYRT (82 aa)) enclose the MtN3/slv 2 domain. Over 130–140 (MVVKTKSVEYM) the chain is Extracellular. Residues 141–161 (PLLLSVVSFLNGLCWTLYALI) form a helical membrane-spanning segment. Over 162 to 164 (RFD) the chain is Cytoplasmic. Residues 165 to 185 (IFITIPNGLGVLFAIMQLILY) form a helical membrane-spanning segment. Residues 186-240 (AIYYRTTPKKQDKNLELPTVAPIAKDTSIVAPVGNDDDVNGSTASHATINITIEP) are Extracellular-facing. Residues asparagine 225 and asparagine 235 are each glycosylated (N-linked (GlcNAc...) asparagine).

It belongs to the SWEET sugar transporter family. In terms of assembly, forms homooligomers and/or heterooligomers.

The protein localises to the cell membrane. Functionally, mediates both low-affinity uptake and efflux of sugar across the plasma membrane. This Oryza sativa subsp. indica (Rice) protein is Bidirectional sugar transporter SWEET7c (SWEET7C).